Reading from the N-terminus, the 276-residue chain is MAIKTYKPYTPSRRFMSVLDSKDITAKSSVKGLLTKLKATAGRNNNGRITSRHKERGAKKLYRIIDFKRNKYNIEGKVAAIEYDPYRNARIALVVYPDGDKRYILQPSGLKVGDSVIAAEGGLDIKVGFAMKLKNIPIGTVVHNIEMHPGAGGQLARSAGMSAQIMGRENKYTIIRMPSSEMRYILSECMASVGVVGNEDFINVSIGKAGRNRHRGIRPQTRGSAMNPVDHPHGGGEGKTGTSGHPVSPWGTPAKGYKTRKKKASDKLIISRKKHK.

The tract at residues 212-276 is disordered; it reads NRHRGIRPQT…KLIISRKKHK (65 aa). Residues 257-276 show a composition bias toward basic residues; the sequence is YKTRKKKASDKLIISRKKHK.

This sequence belongs to the universal ribosomal protein uL2 family. Part of the 50S ribosomal subunit. Forms a bridge to the 30S subunit in the 70S ribosome.

Its function is as follows. One of the primary rRNA binding proteins. Required for association of the 30S and 50S subunits to form the 70S ribosome, for tRNA binding and peptide bond formation. It has been suggested to have peptidyltransferase activity; this is somewhat controversial. Makes several contacts with the 16S rRNA in the 70S ribosome. The sequence is that of Large ribosomal subunit protein uL2 from Helicobacter pylori (strain HPAG1).